A 500-amino-acid chain; its full sequence is Transcription factor-like 5 protein (500 aa).

Pro residues-rich tracts occupy residues 1–12 (MSGPGPREPPPE) and 196–210 (AEPPPAPRGPEPPEP). Disordered regions lie at residues 1–34 (MSGPGPREPPPEAGAAGGEAAVEGAGGGDAALGE) and 191–211 (FNSIPAEPPPAPRGPEPPEPG). The R3 epitope (recognized by Chagas's antibodies) stretch occupies residues 347–356 (MRQLDTNVER). Residues 365 to 410 (VGEGATATQGAWQSSESSQANLGEQAQSGPQGGRSQRRERHNRMER) form a disordered region. Residues 370–393 (TATQGAWQSSESSQANLGEQAQSG) are compositionally biased toward polar residues. A bHLH domain is found at 400–450 (QRRERHNRMERDRRRRIRICCDELNLLVPFCNAETDKATTLQWTTAFLKYI). An R1 epitope (recognized by Chagas's antibodies) region spans residues 481 to 500 (SLVTCPAQGSLQSSPSMEIK).

In terms of assembly, efficient DNA binding requires dimerization with another bHLH protein. As to expression, isoform 3 is testis specific. Isoform 2 is pancreas specific.

Its subcellular location is the nucleus. Functionally, putative transcription factor. Isoform 3 may play a role in early spermatogenesis. In Homo sapiens (Human), this protein is Transcription factor-like 5 protein (TCFL5).